We begin with the raw amino-acid sequence, 423 residues long: Dihydroorotase (423 aa).

Zn(2+)-binding residues include His56 and His58. Residues His58 to Arg60 and Asn89 contribute to the substrate site. Lys137, His168, His227, and Asp302 together coordinate Zn(2+). Lys137 carries the post-translational modification N6-carboxylysine. Asp302 is an active-site residue. His306 provides a ligand contact to substrate.

This sequence belongs to the metallo-dependent hydrolases superfamily. DHOase family. Class I DHOase subfamily. Zn(2+) serves as cofactor.

It catalyses the reaction (S)-dihydroorotate + H2O = N-carbamoyl-L-aspartate + H(+). It participates in pyrimidine metabolism; UMP biosynthesis via de novo pathway; (S)-dihydroorotate from bicarbonate: step 3/3. Functionally, catalyzes the reversible cyclization of carbamoyl aspartate to dihydroorotate. This Methanocaldococcus jannaschii (strain ATCC 43067 / DSM 2661 / JAL-1 / JCM 10045 / NBRC 100440) (Methanococcus jannaschii) protein is Dihydroorotase.